Here is a 529-residue protein sequence, read N- to C-terminus: Phosphoenolpyruvate carboxykinase (ATP) (529 aa).

Residues Arg-60, Tyr-195, and Lys-201 each coordinate substrate. Residues Lys-201, His-220, and 236 to 244 contribute to the ATP site; that span reads GLSGTGKTT. Positions 201 and 220 each coordinate Mn(2+). Asp-257 contacts Mn(2+). Positions 285, 323, and 448 each coordinate ATP. Arg-323 provides a ligand contact to substrate.

Belongs to the phosphoenolpyruvate carboxykinase (ATP) family. It depends on Mn(2+) as a cofactor.

The protein resides in the cytoplasm. The catalysed reaction is oxaloacetate + ATP = phosphoenolpyruvate + ADP + CO2. The protein operates within carbohydrate biosynthesis; gluconeogenesis. Its function is as follows. Involved in the gluconeogenesis. Catalyzes the conversion of oxaloacetate (OAA) to phosphoenolpyruvate (PEP) through direct phosphoryl transfer between the nucleoside triphosphate and OAA. The polypeptide is Phosphoenolpyruvate carboxykinase (ATP) (Geobacter sp. (strain M21)).